Reading from the N-terminus, the 290-residue chain is MLPDSSVRLNKYISESGICSRREADRYIEQGNVFLNGKRATIGDQVKPGDVVKVNGQLIEPREAEDLVLIALNKPVGIVSTTEDGERDNIVDFVNHSKRVFPIGRLDKDSQGLIFLTNHGDLVNKILRAGNDHEKEYLVTVDKPITEEFIRGMSAGVPILGTVTKKCKVKKEAPFVFRITLVQGLNRQIRRMCEHFGYEVKKLERTRIMNVSLSGIPLGEWRDLTDDELIDLFKLIENSSSEVKPKAKAKPKTAGIKRPVVKMEKTAEKGGRPASNGKRFTSPGRKKKGR.

One can recognise an S4 RNA-binding domain in the interval 7 to 72 (VRLNKYISES…EAEDLVLIAL (66 aa)). Interaction with RNA stretches follow at residues 105 to 108 (RLDK) and 187 to 190 (RQIR). Asp107 serves as the catalytic Nucleophile. The tract at residues 243–290 (VKPKAKAKPKTAGIKRPVVKMEKTAEKGGRPASNGKRFTSPGRKKKGR) is disordered. Over residues 261 to 271 (VKMEKTAEKGG) the composition is skewed to basic and acidic residues.

It belongs to the pseudouridine synthase RsuA family. In terms of assembly, monomer.

It carries out the reaction uridine(2604) in 23S rRNA = pseudouridine(2604) in 23S rRNA. The enzyme catalyses uridine(35) in tRNA(Tyr) = pseudouridine(35) in tRNA(Tyr). Its function is as follows. Dual specificity enzyme that catalyzes the synthesis of pseudouridine from uracil-2604 in 23S ribosomal RNA and from uracil-35 in the anticodon of tRNA(Tyr). Can, to a small extent, also react with uracil-2605. The polypeptide is Dual-specificity RNA pseudouridine synthase RluF (rluF) (Escherichia coli (strain K12)).